The primary structure comprises 762 residues: 5-methyltetrahydropteroyltriglutamate--homocysteine methyltransferase (762 aa).

5-methyltetrahydropteroyltri-L-glutamate is bound by residues 17-20 and K111; that span reads REWK. Residues 435 to 437 and E488 each bind L-homocysteine; that span reads IGS. Residues 435–437 and E488 contribute to the L-methionine site; that span reads IGS. 5-methyltetrahydropteroyltri-L-glutamate-binding positions include 519–520 and W565; that span reads RC. D603 contacts L-homocysteine. D603 is a binding site for L-methionine. E609 lines the 5-methyltetrahydropteroyltri-L-glutamate pocket. 3 residues coordinate Zn(2+): H645, C647, and E669. H698 acts as the Proton donor in catalysis. C730 provides a ligand contact to Zn(2+).

The protein belongs to the vitamin-B12 independent methionine synthase family. It depends on Zn(2+) as a cofactor.

It catalyses the reaction 5-methyltetrahydropteroyltri-L-glutamate + L-homocysteine = tetrahydropteroyltri-L-glutamate + L-methionine. It functions in the pathway amino-acid biosynthesis; L-methionine biosynthesis via de novo pathway; L-methionine from L-homocysteine (MetE route): step 1/1. Its function is as follows. Catalyzes the transfer of a methyl group from 5-methyltetrahydrofolate to homocysteine resulting in methionine formation. The chain is 5-methyltetrahydropteroyltriglutamate--homocysteine methyltransferase from Bacillus cereus (strain ATCC 10987 / NRS 248).